The following is a 360-amino-acid chain: Peptide chain release factor 1 (360 aa).

Position 234 is an N5-methylglutamine (Q234).

The protein belongs to the prokaryotic/mitochondrial release factor family. Post-translationally, methylated by PrmC. Methylation increases the termination efficiency of RF1.

It localises to the cytoplasm. Its function is as follows. Peptide chain release factor 1 directs the termination of translation in response to the peptide chain termination codons UAG and UAA. The protein is Peptide chain release factor 1 of Renibacterium salmoninarum (strain ATCC 33209 / DSM 20767 / JCM 11484 / NBRC 15589 / NCIMB 2235).